A 341-amino-acid chain; its full sequence is Phosphate acyltransferase (341 aa).

The protein belongs to the PlsX family. Homodimer. Probably interacts with PlsY.

The protein localises to the cytoplasm. It catalyses the reaction a fatty acyl-[ACP] + phosphate = an acyl phosphate + holo-[ACP]. It functions in the pathway lipid metabolism; phospholipid metabolism. Functionally, catalyzes the reversible formation of acyl-phosphate (acyl-PO(4)) from acyl-[acyl-carrier-protein] (acyl-ACP). This enzyme utilizes acyl-ACP as fatty acyl donor, but not acyl-CoA. This Idiomarina loihiensis (strain ATCC BAA-735 / DSM 15497 / L2-TR) protein is Phosphate acyltransferase.